Reading from the N-terminus, the 393-residue chain is NADH-quinone oxidoreductase subunit D 2 (393 aa).

It belongs to the complex I 49 kDa subunit family. NDH-1 is composed of 14 different subunits. Subunits NuoB, C, D, E, F, and G constitute the peripheral sector of the complex.

Its subcellular location is the cell inner membrane. It carries out the reaction a quinone + NADH + 5 H(+)(in) = a quinol + NAD(+) + 4 H(+)(out). Functionally, NDH-1 shuttles electrons from NADH, via FMN and iron-sulfur (Fe-S) centers, to quinones in the respiratory chain. The immediate electron acceptor for the enzyme in this species is believed to be a menaquinone. Couples the redox reaction to proton translocation (for every two electrons transferred, four hydrogen ions are translocated across the cytoplasmic membrane), and thus conserves the redox energy in a proton gradient. The polypeptide is NADH-quinone oxidoreductase subunit D 2 (Cytophaga hutchinsonii (strain ATCC 33406 / DSM 1761 / CIP 103989 / NBRC 15051 / NCIMB 9469 / D465)).